A 615-amino-acid polypeptide reads, in one-letter code: DNA mismatch repair protein MutL (615 aa).

The segment at 363 to 397 (FAEPAAREPVAPRYTPAPASGSRPAAPWPNAQPGY) is disordered. Residues 364 to 391 (AEPAAREPVAPRYTPAPASGSRPAAPWP) are compositionally biased toward low complexity.

The protein belongs to the DNA mismatch repair MutL/HexB family.

This protein is involved in the repair of mismatches in DNA. It is required for dam-dependent methyl-directed DNA mismatch repair. May act as a 'molecular matchmaker', a protein that promotes the formation of a stable complex between two or more DNA-binding proteins in an ATP-dependent manner without itself being part of a final effector complex. This chain is DNA mismatch repair protein MutL, found in Shigella boydii serotype 18 (strain CDC 3083-94 / BS512).